A 201-amino-acid chain; its full sequence is Guanylate kinase (201 aa).

Residues 2–180 (SCLFVISAPS…AARDVASIVQ (179 aa)) form the Guanylate kinase-like domain. An ATP-binding site is contributed by 9 to 16 (APSGAGKT).

It belongs to the guanylate kinase family.

The protein resides in the cytoplasm. The catalysed reaction is GMP + ATP = GDP + ADP. Its function is as follows. Essential for recycling GMP and indirectly, cGMP. The sequence is that of Guanylate kinase from Nitrosomonas europaea (strain ATCC 19718 / CIP 103999 / KCTC 2705 / NBRC 14298).